Reading from the N-terminus, the 176-residue chain is Nucleoside triphosphate/diphosphate phosphatase (176 aa).

The active-site Proton donor is R23. Mg(2+) contacts are provided by N87, D103, D105, D107, D120, and E123.

It belongs to the Ntdp family. Mg(2+) is required as a cofactor.

The enzyme catalyses a ribonucleoside 5'-triphosphate + H2O = a ribonucleoside 5'-diphosphate + phosphate + H(+). The catalysed reaction is a ribonucleoside 5'-diphosphate + H2O = a ribonucleoside 5'-phosphate + phosphate + H(+). Its function is as follows. Has nucleoside phosphatase activity towards nucleoside triphosphates and nucleoside diphosphates. This Bacillus pumilus (strain SAFR-032) protein is Nucleoside triphosphate/diphosphate phosphatase.